A 1104-amino-acid chain; its full sequence is Lon protease homolog, mitochondrial (1104 aa).

The N-terminal 58 residues, 1–58 (MLPLRAFARLAQRPRLSRPTQLARSSLPRPSPSRPAAHYLALAPAPSTRFLHSSPPVL), are a transit peptide targeting the mitochondrion. The interval 8–144 (ARLAQRPRLS…PGAGGPKEVA (137 aa)) is disordered. The segment covering 22 to 46 (LARSSLPRPSPSRPAAHYLALAPAP) has biased composition (low complexity). Basic and acidic residues predominate over residues 80–103 (KQDDQVEKPLPDAESSKSAEERAK). Residues 104–128 (SQSSKPDIKASSSDSVSSSAPAPGS) show a composition bias toward low complexity. Residues 129 to 139 (ADGGSPPGAGG) show a composition bias toward gly residues. A Lon N-terminal domain is found at 155 to 444 (VLAIPITHRP…RALVLLKKEL (290 aa)). 597–604 (GPPGVGKT) provides a ligand contact to ATP. Residues 895–1082 (SPPAGVSTGL…RQVLHEAFRG (188 aa)) form the Lon proteolytic domain. Residues serine 987 and lysine 1030 contribute to the active site.

Belongs to the peptidase S16 family. In terms of assembly, homohexamer or homoheptamer. Organized in a ring with a central cavity.

Its subcellular location is the mitochondrion matrix. The enzyme catalyses Hydrolysis of proteins in presence of ATP.. In terms of biological role, ATP-dependent serine protease that mediates the selective degradation of misfolded, unassembled or oxidatively damaged polypeptides as well as certain short-lived regulatory proteins in the mitochondrial matrix. May also have a chaperone function in the assembly of inner membrane protein complexes. Participates in the regulation of mitochondrial gene expression and in the maintenance of the integrity of the mitochondrial genome. Binds to mitochondrial DNA in a site-specific manner. The protein is Lon protease homolog, mitochondrial of Cryptococcus neoformans var. neoformans serotype D (strain B-3501A) (Filobasidiella neoformans).